The following is a 362-amino-acid chain: S-adenosylmethionine-dependent nucleotide dehydratase RSAD2 (362 aa).

The disordered stretch occupies residues 49–71 (QQLQGKTEAGEPPRAQEDSHLPT). The segment covering 56 to 68 (EAGEPPRAQEDSH) has biased composition (basic and acidic residues). The region spanning 70 to 290 (PTTPTSVNYH…LDRHKDVSCL (221 aa)) is the Radical SAM core domain. Residues Cys-84, Cys-88, and Cys-91 each contribute to the [4Fe-4S] cluster site. Lys-198 is subject to N6-acetyllysine. Lys-207 participates in a covalent cross-link: Glycyl lysine isopeptide (Lys-Gly) (interchain with G-Cter in ubiquitin).

Belongs to the radical SAM superfamily. RSAD2 family. As to quaternary structure, homodimer. Interacts with IRAK1 and TRAF6. Interacts with FPPS. Interacts with HADHB. Interacts (via C-terminus) with VAPA/VAP33 (via C-terminus). [4Fe-4S] cluster is required as a cofactor. Acetylated by HAT1. HAT1-mediated acetylation of Lys-198 in turn recruits UBE4A that stimulates RSAD2 polyubiquitination leading to proteasomal degradation. Post-translationally, 'Lys-6'-linked polyubiquitination at Lys-207 leads to RSAD2 protein degradation.

Its subcellular location is the endoplasmic reticulum membrane. It localises to the golgi apparatus. The protein localises to the endoplasmic reticulum. The protein resides in the lipid droplet. It is found in the mitochondrion. Its subcellular location is the mitochondrion inner membrane. It localises to the mitochondrion outer membrane. The catalysed reaction is CTP + AH2 + S-adenosyl-L-methionine = 3'-deoxy-3',4'-didehydro-CTP + 5'-deoxyadenosine + L-methionine + A + H2O + H(+). IRAK1 and TRAF6 synergistically activate RSAD2 increasing its activity with CTP as substrate about 10-fold. Its function is as follows. Interferon-inducible antiviral protein which plays a major role in the cell antiviral state induced by type I and type II interferon. Catalyzes the conversion of cytidine triphosphate (CTP) to 3'-deoxy-3',4'-didehydro-CTP (ddhCTP) via a SAM-dependent radical mechanism. In turn, ddhCTP acts as a chain terminator for the RNA-dependent RNA polymerases from multiple viruses and directly inhibits viral replication. Therefore, inhibits a wide range of DNA and RNA viruses. Also promotes TLR7 and TLR9-dependent production of IFN-beta production in plasmacytoid dendritic cells (pDCs) by facilitating 'Lys-63'-linked ubiquitination of IRAK1 by TRAF6. Plays a role in CD4+ T-cells activation and differentiation. Facilitates T-cell receptor (TCR)-mediated GATA3 activation and optimal T-helper 2 (Th2) cytokine production by modulating NFKB1 and JUNB activities. Can inhibit secretion of soluble proteins. This is S-adenosylmethionine-dependent nucleotide dehydratase RSAD2 from Sus scrofa (Pig).